We begin with the raw amino-acid sequence, 1392 residues long: L-2-aminoadipate reductase (1392 aa).

K541 is covalently cross-linked (Glycyl lysine isopeptide (Lys-Gly) (interchain with G-Cter in ubiquitin)). One can recognise a Carrier domain in the interval 843 to 920; the sequence is SQFTNVEREV…AFAAEIDRIK (78 aa). Position 880 is an O-(pantetheine 4'-phosphoryl)serine (S880). A Glycyl lysine isopeptide (Lys-Gly) (interchain with G-Cter in ubiquitin) cross-link involves residue K1276.

It belongs to the ATP-dependent AMP-binding enzyme family. Pantetheine 4'-phosphate is required as a cofactor.

It catalyses the reaction (S)-2-amino-6-oxohexanoate + NADP(+) + H2O = L-2-aminoadipate + NADPH + 2 H(+). The catalysed reaction is (S)-2-amino-6-oxohexanoate + NAD(+) + H2O = L-2-aminoadipate + NADH + 2 H(+). The enzyme catalyses (S)-2-amino-6-oxohexanoate + AMP + diphosphate + NADP(+) = L-2-aminoadipate + ATP + NADPH + H(+). It functions in the pathway amino-acid biosynthesis; L-lysine biosynthesis via AAA pathway; L-lysine from L-alpha-aminoadipate (fungal route): step 1/3. Catalyzes the activation of alpha-aminoadipate by ATP-dependent adenylation and the reduction of activated alpha-aminoadipate by NADPH. The activated alpha-aminoadipate is bound to the phosphopantheinyl group of the enzyme itself before it is reduced to (S)-2-amino-6-oxohexanoate. This chain is L-2-aminoadipate reductase (LYS2), found in Saccharomyces cerevisiae (strain ATCC 204508 / S288c) (Baker's yeast).